We begin with the raw amino-acid sequence, 438 residues long: Serine hydroxymethyltransferase (438 aa).

(6S)-5,6,7,8-tetrahydrofolate contacts are provided by residues Leu119 and 123–125; that span reads GHL. The residue at position 228 (Lys228) is an N6-(pyridoxal phosphate)lysine. 370–372 serves as a coordination point for (6S)-5,6,7,8-tetrahydrofolate; that stretch reads SPF.

The protein belongs to the SHMT family. As to quaternary structure, homodimer. Pyridoxal 5'-phosphate is required as a cofactor.

It localises to the cytoplasm. The enzyme catalyses (6R)-5,10-methylene-5,6,7,8-tetrahydrofolate + glycine + H2O = (6S)-5,6,7,8-tetrahydrofolate + L-serine. Its pathway is one-carbon metabolism; tetrahydrofolate interconversion. The protein operates within amino-acid biosynthesis; glycine biosynthesis; glycine from L-serine: step 1/1. Its function is as follows. Catalyzes the reversible interconversion of serine and glycine with tetrahydrofolate (THF) serving as the one-carbon carrier. This reaction serves as the major source of one-carbon groups required for the biosynthesis of purines, thymidylate, methionine, and other important biomolecules. Also exhibits THF-independent aldolase activity toward beta-hydroxyamino acids, producing glycine and aldehydes, via a retro-aldol mechanism. The chain is Serine hydroxymethyltransferase from Pelodictyon phaeoclathratiforme (strain DSM 5477 / BU-1).